Reading from the N-terminus, the 326-residue chain is Sulfate/thiosulfate import ATP-binding protein CysA (326 aa).

The ABC transporter domain maps to 3–237; the sequence is IEVRNVSKNF…PSNDFVYHFL (235 aa). Residue 35–42 participates in ATP binding; sequence GPSGCGKT.

The protein belongs to the ABC transporter superfamily. Sulfate/tungstate importer (TC 3.A.1.6) family. In terms of assembly, the complex is composed of two ATP-binding proteins (CysA), two transmembrane proteins (CysT and CysW) and a solute-binding protein (CysP).

The protein localises to the cell inner membrane. It carries out the reaction sulfate(out) + ATP + H2O = sulfate(in) + ADP + phosphate + H(+). The enzyme catalyses thiosulfate(out) + ATP + H2O = thiosulfate(in) + ADP + phosphate + H(+). Part of the ABC transporter complex CysAWTP involved in sulfate/thiosulfate import. Responsible for energy coupling to the transport system. The sequence is that of Sulfate/thiosulfate import ATP-binding protein CysA from Pseudomonas syringae pv. tomato (strain ATCC BAA-871 / DC3000).